A 378-amino-acid polypeptide reads, in one-letter code: Putative gustatory receptor 22f (378 aa).

The Cytoplasmic segment spans residues 1–13 (MKMFQPRRGFSCH). Residues 14-34 (LAWFMLQTTLYASWLLGLFPF) form a helical membrane-spanning segment. Topologically, residues 35–48 (TFDSRRKQLKRSRW) are extracellular. Residues 49-69 (LLLYGFVLHSLAMCLAMSSHL) form a helical membrane-spanning segment. Over 70-88 (ASKQRRKYNAFERNPLLEK) the chain is Cytoplasmic. The chain crosses the membrane as a helical span at residues 89-109 (IYMQFQVTTFFTISVLLLMNV). Over 110–143 (WKSNTVRKIANELLTLEGQVKDLLTLKNCPNFNC) the chain is Extracellular. The helical transmembrane segment at 144–164 (FVIKKHVAAIGQFVISIYFCL) threads the bilayer. The Cytoplasmic portion of the chain corresponds to 165-178 (CQENSYPKILKILC). A helical membrane pass occupies residues 179-199 (CLPSVGLQLIIMHFHTEIILV). At 200–245 (YRYVWLVNETLEDSHHLSSSRIHALASLYDRLLKLSELVVACNDLQ) the chain is on the extracellular side. Asn-207 is a glycosylation site (N-linked (GlcNAc...) asparagine). The helical transmembrane segment at 246-266 (LILMLIIYLIGNTVQIFFLIV) threads the bilayer. At 267-354 (LGVSMNKRYI…LCGLFSINHN (88 aa)) the chain is on the cytoplasmic side. The chain crosses the membrane as a helical span at residues 355 to 375 (MGFQMIITSFLYLVYLLQFDF). Residues 376–378 (MNL) lie on the Extracellular side of the membrane.

This sequence belongs to the insect chemoreceptor superfamily. Gustatory receptor (GR) family. Gr22e subfamily. Taste bristles in the foreleg and labial palps.

The protein localises to the cell membrane. In terms of biological role, probable gustatory receptor which mediates acceptance or avoidance behavior, depending on its substrates. This is Putative gustatory receptor 22f (Gr22f) from Drosophila melanogaster (Fruit fly).